A 451-amino-acid chain; its full sequence is Glucose-6-phosphate isomerase (451 aa).

Residue E291 is the Proton donor of the active site. Residues H312 and K426 contribute to the active site.

The protein belongs to the GPI family.

It localises to the cytoplasm. It carries out the reaction alpha-D-glucose 6-phosphate = beta-D-fructose 6-phosphate. Its pathway is carbohydrate biosynthesis; gluconeogenesis. It participates in carbohydrate degradation; glycolysis; D-glyceraldehyde 3-phosphate and glycerone phosphate from D-glucose: step 2/4. Functionally, catalyzes the reversible isomerization of glucose-6-phosphate to fructose-6-phosphate. This is Glucose-6-phosphate isomerase from Thermoanaerobacter sp. (strain X514).